We begin with the raw amino-acid sequence, 168 residues long: MALNLEDKKAVVAEVTAQVAKASTIVVAEYRGITVGDLTKLRAQARQQGVYLRVLKNTLARRAVEGTPFAELAEQLTGPLIYGISEDAVAPAKVLNDFAKGNDKLVLRAGSYDGKVLDVDAVKALATIPSREELLSKLLFVMQAPVSGFARALGALAAKQGEGEAAAA.

The protein belongs to the universal ribosomal protein uL10 family. In terms of assembly, part of the ribosomal stalk of the 50S ribosomal subunit. The N-terminus interacts with L11 and the large rRNA to form the base of the stalk. The C-terminus forms an elongated spine to which L12 dimers bind in a sequential fashion forming a multimeric L10(L12)X complex.

Its function is as follows. Forms part of the ribosomal stalk, playing a central role in the interaction of the ribosome with GTP-bound translation factors. In Ralstonia pickettii (strain 12J), this protein is Large ribosomal subunit protein uL10.